Here is a 454-residue protein sequence, read N- to C-terminus: Chromosomal replication initiator protein DnaA (454 aa).

Residues 1–74 are domain I, interacts with DnaA modulators; the sequence is MFDLEKFWDS…IQSAYAYAGI (74 aa). The domain II stretch occupies residues 74-116; it reads IDIYPVFVVKNGPTPSSERMLEPQPQAKPEKARPQGREFTKDL. The interval 88–112 is disordered; that stretch reads PSSERMLEPQPQAKPEKARPQGREF. Over residues 101–112 the composition is skewed to basic and acidic residues; the sequence is KPEKARPQGREF. The segment at 117-333 is domain III, AAA+ region; that stretch reads RLNEKYTFEN…GALVKVQAQA (217 aa). ATP-binding residues include Gly-161, Gly-163, Lys-164, and Thr-165. The interval 334 to 454 is domain IV, binds dsDNA; the sequence is TIQKQDINIG…VSDLRQMLER (121 aa).

The protein belongs to the DnaA family. Oligomerizes as a right-handed, spiral filament on DNA at oriC.

The protein localises to the cytoplasm. In terms of biological role, plays an essential role in the initiation and regulation of chromosomal replication. ATP-DnaA binds to the origin of replication (oriC) to initiate formation of the DNA replication initiation complex once per cell cycle. Binds the DnaA box (a 9 base pair repeat at the origin) and separates the double-stranded (ds)DNA. Forms a right-handed helical filament on oriC DNA; dsDNA binds to the exterior of the filament while single-stranded (ss)DNA is stabiized in the filament's interior. The ATP-DnaA-oriC complex binds and stabilizes one strand of the AT-rich DNA unwinding element (DUE), permitting loading of DNA polymerase. After initiation quickly degrades to an ADP-DnaA complex that is not apt for DNA replication. Binds acidic phospholipids. The chain is Chromosomal replication initiator protein DnaA from Lactobacillus delbrueckii subsp. bulgaricus (strain ATCC 11842 / DSM 20081 / BCRC 10696 / JCM 1002 / NBRC 13953 / NCIMB 11778 / NCTC 12712 / WDCM 00102 / Lb 14).